The following is an 878-amino-acid chain: Aconitate hydratase A (878 aa).

Positions 426, 492, and 495 each coordinate [4Fe-4S] cluster.

This sequence belongs to the aconitase/IPM isomerase family. As to quaternary structure, monomer. [4Fe-4S] cluster is required as a cofactor.

It catalyses the reaction citrate = D-threo-isocitrate. The enzyme catalyses (2S,3R)-3-hydroxybutane-1,2,3-tricarboxylate = 2-methyl-cis-aconitate + H2O. Its pathway is carbohydrate metabolism; tricarboxylic acid cycle; isocitrate from oxaloacetate: step 2/2. It participates in organic acid metabolism; propanoate degradation. In terms of biological role, involved in the catabolism of short chain fatty acids (SCFA) via the tricarboxylic acid (TCA)(acetyl degradation route) and probably the 2-methylcitrate cycle I (propionate degradation route). Catalyzes the reversible isomerization of citrate to isocitrate via cis-aconitate. Could catalyze the hydration of 2-methyl-cis-aconitate to yield (2R,3S)-2-methylisocitrate. The apo form of AcnA functions as a RNA-binding regulatory protein. The protein is Aconitate hydratase A (acnA) of Rickettsia felis (strain ATCC VR-1525 / URRWXCal2) (Rickettsia azadi).